Reading from the N-terminus, the 189-residue chain is Interferon alpha-16 (189 aa).

The signal sequence occupies residues 1-23 (MALSFSLLMAVLVLSYKSICSLG). 2 cysteine pairs are disulfide-bonded: Cys24/Cys122 and Cys52/Cys162.

It belongs to the alpha/beta interferon family.

The protein resides in the secreted. Functionally, produced by macrophages, IFN-alpha have antiviral activities. Interferon stimulates the production of two enzymes: a protein kinase and an oligoadenylate synthetase. In Homo sapiens (Human), this protein is Interferon alpha-16 (IFNA16).